The chain runs to 357 residues: Protein RecA (357 aa).

73–80 (GPESSGKT) provides a ligand contact to ATP.

The protein belongs to the RecA family.

It localises to the cytoplasm. Can catalyze the hydrolysis of ATP in the presence of single-stranded DNA, the ATP-dependent uptake of single-stranded DNA by duplex DNA, and the ATP-dependent hybridization of homologous single-stranded DNAs. It interacts with LexA causing its activation and leading to its autocatalytic cleavage. In Nitratidesulfovibrio vulgaris (strain DSM 19637 / Miyazaki F) (Desulfovibrio vulgaris), this protein is Protein RecA.